We begin with the raw amino-acid sequence, 88 residues long: Large ribosomal subunit protein bL27 (88 aa).

Positions 1–21 (MAHKKGASSSRNGRDSNAQRL) are disordered. Residues 7–19 (ASSSRNGRDSNAQ) show a composition bias toward polar residues.

Belongs to the bacterial ribosomal protein bL27 family.

The polypeptide is Large ribosomal subunit protein bL27 (Frankia casuarinae (strain DSM 45818 / CECT 9043 / HFP020203 / CcI3)).